We begin with the raw amino-acid sequence, 144 residues long: Succinate dehydrogenase cytochrome b560 subunit (144 aa).

3 consecutive transmembrane segments (helical) span residues 40–60 (IFHR…ILIL), 84–104 (GFLF…HLFA), and 124–144 (LTGY…WIIF). Histidine 101 contributes to the heme binding site.

This sequence belongs to the cytochrome b560 family. In terms of assembly, forms part of complex II containing four subunits: a 70 kDa flavoprotein (FP), a 27 kDa iron-sulfur protein (IP), a cytochrome B and a membrane-anchoring protein. It depends on heme as a cofactor.

The protein resides in the mitochondrion inner membrane. Its pathway is carbohydrate metabolism; tricarboxylic acid cycle. Functionally, membrane-anchoring subunit of succinate dehydrogenase (SDH) that is involved in complex II of the mitochondrial electron transport chain and is responsible for transferring electrons from succinate to ubiquinone (coenzyme Q). The protein is Succinate dehydrogenase cytochrome b560 subunit (SDH3) of Reclinomonas americana.